We begin with the raw amino-acid sequence, 78 residues long: Sec-independent protein translocase protein TatA (78 aa).

Residues 1–21 (MGGISIWQLLIVALIVVLLFG) form a helical membrane-spanning segment. Residues 40-78 (KSAMSSEEEKKAIEDSASEKTAQTEEKKTESKDKDKEQV) form a disordered region. Residues 46–78 (EEEKKAIEDSASEKTAQTEEKKTESKDKDKEQV) show a composition bias toward basic and acidic residues.

Belongs to the TatA/E family. In terms of assembly, the Tat system comprises two distinct complexes: a TatABC complex, containing multiple copies of TatA, TatB and TatC subunits, and a separate TatA complex, containing only TatA subunits. Substrates initially bind to the TatABC complex, which probably triggers association of the separate TatA complex to form the active translocon.

It is found in the cell inner membrane. In terms of biological role, part of the twin-arginine translocation (Tat) system that transports large folded proteins containing a characteristic twin-arginine motif in their signal peptide across membranes. TatA could form the protein-conducting channel of the Tat system. The polypeptide is Sec-independent protein translocase protein TatA (Shewanella sediminis (strain HAW-EB3)).